The following is a 160-amino-acid chain: Putative transcriptional regulator protein YobU (160 aa).

This Bacillus subtilis (strain 168) protein is Putative transcriptional regulator protein YobU (yobU).